The chain runs to 226 residues: Biosynthetic peptidoglycan transglycosylase (226 aa).

Residues 8-28 (FFGWTWFVMWRFLLLLALLLL) traverse the membrane as a helical segment.

This sequence belongs to the glycosyltransferase 51 family.

The protein resides in the cell inner membrane. The catalysed reaction is [GlcNAc-(1-&gt;4)-Mur2Ac(oyl-L-Ala-gamma-D-Glu-L-Lys-D-Ala-D-Ala)](n)-di-trans,octa-cis-undecaprenyl diphosphate + beta-D-GlcNAc-(1-&gt;4)-Mur2Ac(oyl-L-Ala-gamma-D-Glu-L-Lys-D-Ala-D-Ala)-di-trans,octa-cis-undecaprenyl diphosphate = [GlcNAc-(1-&gt;4)-Mur2Ac(oyl-L-Ala-gamma-D-Glu-L-Lys-D-Ala-D-Ala)](n+1)-di-trans,octa-cis-undecaprenyl diphosphate + di-trans,octa-cis-undecaprenyl diphosphate + H(+). It participates in cell wall biogenesis; peptidoglycan biosynthesis. Functionally, peptidoglycan polymerase that catalyzes glycan chain elongation from lipid-linked precursors. In Shewanella frigidimarina (strain NCIMB 400), this protein is Biosynthetic peptidoglycan transglycosylase.